A 145-amino-acid chain; its full sequence is LIRP (145 aa).

A signal peptide (or 22) is located at residues 1 to 19 (MWKLCLRLLAVLAVCLSTA). 2 consecutive propeptides follow at residues 20 to 33 (TQAQ…SPKR) and 117 to 122 (FRRRTR). Disulfide bonds link Cys44/Cys129, Cys56/Cys142, and Cys128/Cys133.

The protein belongs to the insulin family. As to quaternary structure, heterodimer of a B chain and an A chain linked by two disulfide bonds.

Its subcellular location is the secreted. In Locusta migratoria (Migratory locust), this protein is LIRP.